The primary structure comprises 862 residues: Putative PIP5K1A and PSMD4-like protein (862 aa).

Positions 28 to 396 constitute a PIPK domain; it reads TSSALKGAIQ…WFQRFMCNTV (369 aa). Disordered regions lie at residues 404 to 424 and 453 to 481; these read PSPS…GSSG and HLGC…PSFS. Over residues 412-424 the composition is skewed to low complexity; that stretch reads SGSSFSQRAGSSG. One can recognise a VWFA domain in the interval 490 to 673; it reads MLTTSVDNSE…LADALISFPI (184 aa). The UIM 1 domain occupies 696–715; that stretch reads SADPELALVLRVFMEEQRQR. Residues 716–740 form a disordered region; sequence QEEEARQAAAASAAEAGIATTGTED. The segment covering 722–731 has biased composition (low complexity); that stretch reads QAAAASAAEA. Residues 766 to 783 form the UIM 2 domain; it reads MTEEEKIVCAMQMSLQGA. Positions 826–862 are disordered; that stretch reads NLPGVDPNNEAIRNAVGSLASQATKDSKKDKKEEDKK. The segment covering 850–862 has biased composition (basic and acidic residues); the sequence is KDSKKDKKEEDKK.

In terms of tissue distribution, testis-specific.

The protein localises to the cytoplasm. Its function is as follows. Has negligible PIP5 kinase activity. Binds to ubiquitinated proteins. In Homo sapiens (Human), this protein is Putative PIP5K1A and PSMD4-like protein (PIPSL).